The primary structure comprises 772 residues: Cadherin-19 (772 aa).

The signal sequence occupies residues 1–21; the sequence is MNCYLLLRFMLGIPLLWPCLG. Residues 22 to 43 constitute a propeptide that is removed on maturation; sequence ATENSQTKKVKQPVRSHLRVKR. 5 consecutive Cadherin domains span residues 44–148, 149–256, 257–370, 371–470, and 470–581; these read GWVW…EPKF, LDEP…KPIF, KESL…PPLF, LLPY…APEF, and FSQY…STQT. Topologically, residues 44-596 are extracellular; it reads GWVWNQFFVP…LVLSMGFKTE (553 aa). N-linked (GlcNAc...) asparagine glycans are attached at residues Asn-57 and Asn-74. 6 N-linked (GlcNAc...) asparagine glycosylation sites follow: Asn-419, Asn-437, Asn-508, Asn-515, Asn-516, and Asn-534. Residues 597-617 form a helical membrane-spanning segment; that stretch reads VIIAILICIMIIFGFIFLTLG. Residues 618 to 772 lie on the Cytoplasmic side of the membrane; the sequence is LKQRRKQILF…MFGSAVQSNN (155 aa).

In terms of tissue distribution, expressed in many tissues, with the exception of uterus.

It is found in the cell membrane. Cadherins are calcium-dependent cell adhesion proteins. They preferentially interact with themselves in a homophilic manner in connecting cells; cadherins may thus contribute to the sorting of heterogeneous cell types. This chain is Cadherin-19 (CDH19), found in Homo sapiens (Human).